The primary structure comprises 98 residues: Lipolysis-activating peptide 1-alpha chain (98 aa).

Residues 1 to 22 (MMKFVLFGMIVILFSLMGSIRG) form the signal peptide. The LCN-type CS-alpha/beta domain occupies 26-89 (PGNYPTNAYG…IWNAVKNHCT (64 aa)). 3 disulfides stabilise this stretch: Cys40–Cys63, Cys49–Cys68, and Cys53–Cys70. Asn96 is subject to Asparagine amide.

This sequence belongs to the long (3 C-C) scorpion toxin superfamily. As to quaternary structure, monomer (edited version) and heterodimer (non-edited version) of this alpha chain and a beta chain (AC Q95P90). Expressed by the venom gland.

The protein localises to the secreted. In terms of biological role, the heterodimer non-edited LVP1 induces lipolysis in rat adipocytes. Induction of lipolysis by LVP1 appears to be mediated through the beta-2 adrenergic receptor pathway (ADRB2). The edited BmKBTx, similar to beta-toxins, may modulate voltage-gated sodium channels (Nav) and may block voltage-gated potassium channels (Kv). Seems to be a rare component in the venom. The chain is Lipolysis-activating peptide 1-alpha chain (LVP1a) from Olivierus martensii (Manchurian scorpion).